The sequence spans 72 residues: MSKVCVLTGKRPKYGNTVSHANNHRRTRFEPNLHTKRIWIEEEKRWAKVKLSAKAMRIIAKTGTGELAKLLK.

The protein belongs to the bacterial ribosomal protein bL28 family.

The polypeptide is Large ribosomal subunit protein bL28 (Chlorobium phaeovibrioides (strain DSM 265 / 1930) (Prosthecochloris vibrioformis (strain DSM 265))).